Here is a 111-residue protein sequence, read N- to C-terminus: Ribonuclease P protein component (111 aa).

This sequence belongs to the RnpA family. As to quaternary structure, consists of a catalytic RNA component (M1 or rnpB) and a protein subunit.

The enzyme catalyses Endonucleolytic cleavage of RNA, removing 5'-extranucleotides from tRNA precursor.. Functionally, RNaseP catalyzes the removal of the 5'-leader sequence from pre-tRNA to produce the mature 5'-terminus. It can also cleave other RNA substrates such as 4.5S RNA. The protein component plays an auxiliary but essential role in vivo by binding to the 5'-leader sequence and broadening the substrate specificity of the ribozyme. The chain is Ribonuclease P protein component from Borreliella afzelii (strain PKo) (Borrelia afzelii).